Consider the following 1410-residue polypeptide: Ribosome-binding protein 1 (1410 aa).

Residues 1–7 (MDIYDTQ) are Lumenal-facing. Residues 8–28 (TLGVVVFGGFMVVSAIGIFLV) traverse the membrane as a helical segment. Residues 29-1410 (STFSMKETSY…GSSSKEGTSV (1382 aa)) are Cytoplasmic-facing. Disordered regions lie at residues 44-90 (NQRK…DPAP) and 129-152 (QEKLASSPKDKKKKEKKVAKVEPA). Over residues 52 to 63 (THHQKVEKKKKE) the composition is skewed to basic residues. Over residues 64–88 (KTVEKKGKTKKKEEKPNGKIPDHDP) the composition is skewed to basic and acidic residues. Lys148 participates in a covalent cross-link: Glycyl lysine isopeptide (Lys-Gly) (interchain with G-Cter in SUMO2). A phosphoserine mark is found at Ser159 and Ser165. Disordered regions lie at residues 173–648 (APKE…PLYL) and 895–925 (QSSHASLRADAEKAQEQQQQMAELHSKLQSS). Polar residues-rich tracts occupy residues 191–209 (TPATGTTQGKKAEGTQNQS) and 225–238 (TPNQGKKTEGTPNQ). A run of 33 repeats spans residues 197–206 (TQGKKAEGTQ), 207–216 (NQSKKAEGAP), 217–226 (NQGRKAEGTP), 227–236 (NQGKKTEGTP), 237–246 (NQGKKAEGTP), 247–256 (NQGKKAEGTP), 257–266 (NQGKKAEGAQ), 267–276 (NQGKKVDTTP), 277–286 (NQGKKVEGAP), 287–296 (TQGRKAEGAQ), 297–306 (NQAKKVEGAQ), 307–316 (NQGKKAEGAQ), 317–326 (NQGKKGEGAQ), 327–336 (NQGKKAEGAQ), 337–346 (NQGKKAEGAQ), 347–356 (NQGKKAEGAQ), 357–366 (NQGKKAEGAQ), 367–376 (NQGKKAEGAQ), 377–386 (NQGKKAEGAQ), 387–396 (NQGKKVEGAQ), 397–406 (NQGKKAEGAQ), 407–416 (NQGKKAEGAQ), 417–426 (NQGKKAEGAQ), 427–436 (NQGKKAEGAQ), 437–446 (NQGKKAEGAQ), 447–456 (NQGKKAEGAQ), 457–466 (NQGKKAEGAQ), 467–476 (NQGKKVEGAQ), 477–486 (NQGKKAEGAQ), 487–496 (NQGKKAEGAQ), 497–506 (NQGKKAEGAQ), 507–516 (NQGQKGEGAQ), and 517–526 (NQGKKTEGAQ). The 41 X 10 AA approximate tandem repeats of [TN]-Q-[GSA]-[KRQT]-K-[ATGSV]-[ED]-[GTAS]-[ATIS]-[PQTAS] stretch occupies residues 197-604 (TQGKKAEGTQ…NQGKKTESAS (408 aa)). Residues Thr225, Thr235, Thr245, and Thr255 each carry the phosphothreonine modification. Polar residues-rich tracts occupy residues 265–278 (AQNQGKKVDTTPNQ) and 295–519 (AQNQ…QNQG). The segment covering 520-532 (KKTEGAQGKKAER) has biased composition (basic and acidic residues). One copy of the 34; approximate repeat lies at 527 to 534 (GKKAERSP). The residue at position 533 (Ser533) is a Phosphoserine. The stretch at 535–544 (NQGKKGEGAP) is repeat 35. The 36; approximate repeat unit spans residues 545-554 (IQGKKADSVA). A compositionally biased stretch (polar residues) spans 553–567 (VANQGTKVEGITNQG). 2 consecutive repeat copies span residues 555–564 (NQGTKVEGIT) and 565–574 (NQGKKAEGSP). A compositionally biased stretch (basic and acidic residues) spans 568 to 581 (KKAEGSPSEGKKAE). 2 positions are modified to phosphoserine: Ser573 and Ser583. The 39; approximate repeat unit spans residues 575–584 (SEGKKAEGSP). 2 tandem repeats follow at residues 585-594 (NQGKKADAAA) and 595-604 (NQGKKTESAS). Residues 602–612 (SASVQGRNTDV) are compositionally biased toward polar residues. Ser615 carries the post-translational modification Phosphoserine. Residue Lys620 forms a Glycyl lysine isopeptide (Lys-Gly) (interchain with G-Cter in SUMO1) linkage. Ser900 carries the phosphoserine modification. Lys932 is modified (N6-acetyllysine). A phosphoserine mark is found at Ser959 and Ser978. Disordered stretches follow at residues 1093 to 1122 (GPTLLKHPPAPAEPSSDLASKLREAEETQS), 1260 to 1287 (EMKSHVEDGDIAGAPASSPEAPPAEQDP), 1330 to 1362 (EKLRTAGPLESSETEEASQLKERLEKEKKLTSD), and 1378 to 1410 (QEQLAREKDTVKKLQEQLEKAEDGSSSKEGTSV). Phosphoserine occurs at positions 1276 and 1277. Composition is skewed to basic and acidic residues over residues 1347–1360 (SQLKERLEKEKKLT) and 1381–1403 (LAREKDTVKKLQEQLEKAEDGSS).

The protein localises to the endoplasmic reticulum membrane. Acts as a ribosome receptor and mediates interaction between the ribosome and the endoplasmic reticulum membrane. The chain is Ribosome-binding protein 1 (RRBP1) from Homo sapiens (Human).